A 245-amino-acid chain; its full sequence is Phosducin (245 aa).

Residues 1–67 form a disordered region; sequence MEEARRQSLE…SRDDKDSKER (67 aa). Residues 1 to 241 enclose the Phosducin domain; the sequence is MEEARRQSLE…IHALEQTSME (241 aa). Basic and acidic residues predominate over residues 58 to 67; the sequence is SRDDKDSKER. At serine 73 the chain carries Phosphoserine; by PKA. A thioredoxin fold region spans residues 111–245; sequence YGFVYELETG…EQTSMEEDVE (135 aa).

Belongs to the phosducin family. Forms a complex with the beta and gamma subunits of the GTP-binding protein, transducin. Interacts with CRX. Post-translationally, light-induced changes in cyclic nucleotide levels modulate the phosphorylation of this protein by cAMP kinase.

It localises to the cytoplasm. The protein resides in the cytosol. Its subcellular location is the nucleus. The protein localises to the cell projection. It is found in the cilium. It localises to the photoreceptor outer segment. The protein resides in the photoreceptor inner segment. In terms of biological role, may participate in the regulation of visual phototransduction or in the integration of photoreceptor metabolism. Inhibits the transcriptional activation activity of the cone-rod homeobox CRX. This is Phosducin (PDC) from Equus caballus (Horse).